The chain runs to 77 residues: Acyl carrier protein (77 aa).

The 76-residue stretch at 1-76 (MENFDKVKDI…DAVKYINSLE (76 aa)) folds into the Carrier domain. Residue S36 is modified to O-(pantetheine 4'-phosphoryl)serine.

Belongs to the acyl carrier protein (ACP) family. Post-translationally, 4'-phosphopantetheine is transferred from CoA to a specific serine of apo-ACP by AcpS. This modification is essential for activity because fatty acids are bound in thioester linkage to the sulfhydryl of the prosthetic group.

The protein localises to the cytoplasm. Its pathway is lipid metabolism; fatty acid biosynthesis. Functionally, carrier of the growing fatty acid chain in fatty acid biosynthesis. The protein is Acyl carrier protein of Staphylococcus epidermidis (strain ATCC 12228 / FDA PCI 1200).